A 357-amino-acid chain; its full sequence is F-box only protein 25 (357 aa).

The interaction with beta-actin stretch occupies residues 1–83; sequence MPFLGQDWRS…NDTNTQCFYR (83 aa). Residues 225–273 form the F-box domain; the sequence is LTLSDLPVHMLSNILYRFSDGWDIVTLGQVTPTLSALSEDRQLWKKLCQ.

Part of a SCF (SKP1-cullin-F-box) protein ligase complex consisting of FBXO25, SKP1, CUL1 and RBX1. Interacts directly with SKP1 and CUL1. Interacts (via C-terminus) with beta-actin (via N-terminus).

It localises to the nucleus. The protein operates within protein modification; protein ubiquitination. Substrate-recognition component of the SCF (SKP1-CUL1-F-box protein)-type E3 ubiquitin ligase complex. May play a role in accumulation of expanded polyglutamine (polyQ) protein huntingtin (HTT). The sequence is that of F-box only protein 25 (FBXO25) from Bos taurus (Bovine).